An 86-amino-acid polypeptide reads, in one-letter code: Neuropeptide-like 2 (86 aa).

Residues 1–19 (MAKLAICILVFALFALALS) form the signal peptide. Propeptides lie at residues 20 to 34 (ARVP…QEFL) and 45 to 86 (IEKL…AAST).

In terms of tissue distribution, hemolymph (at protein level).

It is found in the secreted. This is Neuropeptide-like 2 (Nplp2) from Drosophila melanogaster (Fruit fly).